A 163-amino-acid chain; its full sequence is UPF0416 protein RBE_0909 (163 aa).

The protein belongs to the UPF0416 family.

In Rickettsia bellii (strain RML369-C), this protein is UPF0416 protein RBE_0909.